We begin with the raw amino-acid sequence, 954 residues long: Glycine dehydrogenase (decarboxylating) (954 aa).

Lys704 is modified (N6-(pyridoxal phosphate)lysine).

The protein belongs to the GcvP family. In terms of assembly, the glycine cleavage system is composed of four proteins: P, T, L and H. Pyridoxal 5'-phosphate is required as a cofactor.

The catalysed reaction is N(6)-[(R)-lipoyl]-L-lysyl-[glycine-cleavage complex H protein] + glycine + H(+) = N(6)-[(R)-S(8)-aminomethyldihydrolipoyl]-L-lysyl-[glycine-cleavage complex H protein] + CO2. Its function is as follows. The glycine cleavage system catalyzes the degradation of glycine. The P protein binds the alpha-amino group of glycine through its pyridoxal phosphate cofactor; CO(2) is released and the remaining methylamine moiety is then transferred to the lipoamide cofactor of the H protein. This chain is Glycine dehydrogenase (decarboxylating), found in Vibrio parahaemolyticus serotype O3:K6 (strain RIMD 2210633).